The chain runs to 81 residues: Cytochrome c oxidase subunit NDUFA4 (81 aa).

Residues 1 to 14 (MLRQIIGQAKKHPS) are Mitochondrial matrix-facing. N6-acetyllysine is present on K10. A helical membrane pass occupies residues 15-37 (LIPLFVFIGTGATGATLYLLRLA). The Mitochondrial intermembrane segment spans residues 38-81 (LFNPDVCWDRNNPEPWNKLGPNDQYKFYSVNVDYSKLKKERPDF). Position 66 is a phosphoserine (S66).

Belongs to the complex IV NDUFA4 subunit family. As to quaternary structure, component of the cytochrome c oxidase (complex IV, CIV), a multisubunit enzyme composed of 14 subunits. The complex is composed of a catalytic core of 3 subunits MT-CO1, MT-CO2 and MT-CO3, encoded in the mitochondrial DNA, and 11 supernumerary subunits COX4I1 (or COX4I2), COX5A, COX5B, COX6A1 (or COX6A2), COX6B1 (or COX6B2), COX6C, COX7A2 (or COX7A1), COX7B, COX7C, COX8A and NDUFA4, which are encoded in the nuclear genome. The complex exists as a monomer or a dimer and forms supercomplexes (SCs) in the inner mitochondrial membrane with NADH-ubiquinone oxidoreductase (complex I, CI) and ubiquinol-cytochrome c oxidoreductase (cytochrome b-c1 complex, complex III, CIII), resulting in different assemblies (supercomplex SCI(1)III(2)IV(1) and megacomplex MCI(2)III(2)IV(2)). Interacts with RAB5IF. Interacts with FLVCR2; this interaction occurs in the absence of heme and is disrupted upon heme binding.

The protein localises to the mitochondrion inner membrane. In terms of biological role, component of the cytochrome c oxidase, the last enzyme in the mitochondrial electron transport chain which drives oxidative phosphorylation. The respiratory chain contains 3 multisubunit complexes succinate dehydrogenase (complex II, CII), ubiquinol-cytochrome c oxidoreductase (cytochrome b-c1 complex, complex III, CIII) and cytochrome c oxidase (complex IV, CIV), that cooperate to transfer electrons derived from NADH and succinate to molecular oxygen, creating an electrochemical gradient over the inner membrane that drives transmembrane transport and the ATP synthase. Cytochrome c oxidase is the component of the respiratory chain that catalyzes the reduction of oxygen to water. Electrons originating from reduced cytochrome c in the intermembrane space (IMS) are transferred via the dinuclear copper A center (CU(A)) of subunit 2 and heme A of subunit 1 to the active site in subunit 1, a binuclear center (BNC) formed by heme A3 and copper B (CU(B)). The BNC reduces molecular oxygen to 2 water molecules unsing 4 electrons from cytochrome c in the IMS and 4 protons from the mitochondrial matrix. NDUFA4 is required for complex IV maintenance. The polypeptide is Cytochrome c oxidase subunit NDUFA4 (NDUFA4) (Homo sapiens (Human)).